The sequence spans 112 residues: Large ribosomal subunit protein uL18 (112 aa).

This sequence belongs to the universal ribosomal protein uL18 family. Part of the 50S ribosomal subunit; part of the 5S rRNA/L5/L18/L25 subcomplex. Contacts the 5S and 23S rRNAs.

Functionally, this is one of the proteins that bind and probably mediate the attachment of the 5S RNA into the large ribosomal subunit, where it forms part of the central protuberance. The polypeptide is Large ribosomal subunit protein uL18 (Deinococcus deserti (strain DSM 17065 / CIP 109153 / LMG 22923 / VCD115)).